A 227-amino-acid chain; its full sequence is PKHD-type hydroxylase Mfla_2317 (227 aa).

Residues 78–178 (KVFPPLFNRY…RVSSFFWMQS (101 aa)) enclose the Fe2OG dioxygenase domain. Positions 96, 98, and 159 each coordinate Fe cation. Residue R169 participates in 2-oxoglutarate binding.

Requires Fe(2+) as cofactor. L-ascorbate serves as cofactor.

This is PKHD-type hydroxylase Mfla_2317 from Methylobacillus flagellatus (strain ATCC 51484 / DSM 6875 / VKM B-1610 / KT).